The chain runs to 216 residues: MHIILMGPPGAGKGTQAVLLAGQEGIPHISTGDIFRAHMSQGTPLGKLAKEYVDAGKYVPDDVTNAMVRDRLAQPDCKKGFVLDGYPRTPEQARALDEMLAELGLALDAVINIDVPDELLVERAVGRRVCRSCGATYHVRFNPPREAGRCDRCGGELYQRSDDQEEKVAVRLNLYHSQTAPLLQFYKERGLVRTVRGDQPMDQVTADIKEAVRASR.

Residue 10–15 (GAGKGT) coordinates ATP. The segment at 30–59 (STGDIFRAHMSQGTPLGKLAKEYVDAGKYV) is NMP. AMP-binding positions include Thr31, Arg36, 57–59 (KYV), 85–88 (GYPR), and Gln92. An LID region spans residues 126–163 (GRRVCRSCGATYHVRFNPPREAGRCDRCGGELYQRSDD). Arg127 is an ATP binding site. Cys130 and Cys133 together coordinate Zn(2+). ATP is bound at residue 136 to 137 (TY). Zn(2+)-binding residues include Cys150 and Cys153. Arg160 and Arg171 together coordinate AMP. Gln199 is a binding site for ATP.

Belongs to the adenylate kinase family. In terms of assembly, monomer.

It localises to the cytoplasm. It catalyses the reaction AMP + ATP = 2 ADP. It participates in purine metabolism; AMP biosynthesis via salvage pathway; AMP from ADP: step 1/1. Its function is as follows. Catalyzes the reversible transfer of the terminal phosphate group between ATP and AMP. Plays an important role in cellular energy homeostasis and in adenine nucleotide metabolism. The chain is Adenylate kinase from Symbiobacterium thermophilum (strain DSM 24528 / JCM 14929 / IAM 14863 / T).